The following is a 305-amino-acid chain: Ferrochelatase (305 aa).

Residues H182 and E262 each contribute to the Fe cation site.

It belongs to the ferrochelatase family.

It localises to the cytoplasm. The enzyme catalyses heme b + 2 H(+) = protoporphyrin IX + Fe(2+). Its pathway is porphyrin-containing compound metabolism; protoheme biosynthesis; protoheme from protoporphyrin-IX: step 1/1. Functionally, catalyzes the ferrous insertion into protoporphyrin IX. The polypeptide is Ferrochelatase (Herpetosiphon aurantiacus (strain ATCC 23779 / DSM 785 / 114-95)).